A 1026-amino-acid chain; its full sequence is Cadherin-like and PC-esterase domain-containing protein 1 (1026 aa).

The first 34 residues, 1–34 (MVCRPVFPCRRRFCPRPFLVGLVVAICLFYQTLT), serve as a signal peptide directing secretion. 6 N-linked (GlcNAc...) asparagine glycosylation sites follow: Asn251, Asn404, Asn413, Asn737, Asn791, and Asn985.

Belongs to the PC-esterase family.

This chain is Cadherin-like and PC-esterase domain-containing protein 1 (CPED1), found in Homo sapiens (Human).